The chain runs to 156 residues: 6,7-dimethyl-8-ribityllumazine synthase (156 aa).

5-amino-6-(D-ribitylamino)uracil-binding positions include Phe22, 57–59, and 81–83; these read AYE and TVI. 86-87 is a (2S)-2-hydroxy-3-oxobutyl phosphate binding site; it reads GT. The active-site Proton donor is His89. Phe114 is a 5-amino-6-(D-ribitylamino)uracil binding site. Arg128 provides a ligand contact to (2S)-2-hydroxy-3-oxobutyl phosphate.

Belongs to the DMRL synthase family. As to quaternary structure, forms an icosahedral capsid composed of 60 subunits, arranged as a dodecamer of pentamers.

The catalysed reaction is (2S)-2-hydroxy-3-oxobutyl phosphate + 5-amino-6-(D-ribitylamino)uracil = 6,7-dimethyl-8-(1-D-ribityl)lumazine + phosphate + 2 H2O + H(+). Its pathway is cofactor biosynthesis; riboflavin biosynthesis; riboflavin from 2-hydroxy-3-oxobutyl phosphate and 5-amino-6-(D-ribitylamino)uracil: step 1/2. Functionally, catalyzes the formation of 6,7-dimethyl-8-ribityllumazine by condensation of 5-amino-6-(D-ribitylamino)uracil with 3,4-dihydroxy-2-butanone 4-phosphate. This is the penultimate step in the biosynthesis of riboflavin. This chain is 6,7-dimethyl-8-ribityllumazine synthase, found in Sodalis glossinidius (strain morsitans).